The sequence spans 264 residues: NAD-capped RNA hydrolase NudC (264 aa).

Residue R70 coordinates substrate. 2 residues coordinate Zn(2+): C99 and C102. E112 provides a ligand contact to substrate. Zn(2+) contacts are provided by C117 and C120. A substrate-binding site is contributed by Y125. The Nudix hydrolase domain occupies 126–253; it reads PVICPSIIVA…TIARKLIHVT (128 aa). Residues A162, E178, and E182 each coordinate a divalent metal cation. Positions 163–184 match the Nudix box motif; the sequence is GFVEVGETFEQAVQREVFEETG. Position 196 to 203 (196 to 203) interacts with substrate; the sequence is QPWAFPNS. E223 is a binding site for a divalent metal cation. Position 246 (A246) interacts with substrate.

It belongs to the Nudix hydrolase family. NudC subfamily. As to quaternary structure, homodimer. It depends on Mg(2+) as a cofactor. The cofactor is Mn(2+). Zn(2+) serves as cofactor.

It catalyses the reaction a 5'-end NAD(+)-phospho-ribonucleoside in mRNA + H2O = a 5'-end phospho-adenosine-phospho-ribonucleoside in mRNA + beta-nicotinamide D-ribonucleotide + 2 H(+). It carries out the reaction NAD(+) + H2O = beta-nicotinamide D-ribonucleotide + AMP + 2 H(+). The catalysed reaction is NADH + H2O = reduced beta-nicotinamide D-ribonucleotide + AMP + 2 H(+). Functionally, mRNA decapping enzyme that specifically removes the nicotinamide adenine dinucleotide (NAD) cap from a subset of mRNAs by hydrolyzing the diphosphate linkage to produce nicotinamide mononucleotide (NMN) and 5' monophosphate mRNA. The NAD-cap is present at the 5'-end of some mRNAs and stabilizes RNA against 5'-processing. Has preference for mRNAs with a 5'-end purine. Catalyzes the hydrolysis of a broad range of dinucleotide pyrophosphates. This chain is NAD-capped RNA hydrolase NudC, found in Haemophilus influenzae (strain 86-028NP).